The sequence spans 563 residues: Arginine--tRNA ligase (563 aa).

A 'HIGH' region motif is present at residues 120–130 (PNIAKPFHIGH).

The protein belongs to the class-I aminoacyl-tRNA synthetase family. As to quaternary structure, monomer.

The protein localises to the cytoplasm. It carries out the reaction tRNA(Arg) + L-arginine + ATP = L-arginyl-tRNA(Arg) + AMP + diphosphate. This Clostridium botulinum (strain Loch Maree / Type A3) protein is Arginine--tRNA ligase.